Reading from the N-terminus, the 82-residue chain is Putative defensin-like protein 48 (82 aa).

Residues 1 to 28 form the signal peptide; sequence MGIKTLIIFFHIFILAVLSSNNIILTSG. 4 disulfides stabilise this stretch: C39/C80, C43/C67, C53/C78, and C57/C79.

Belongs to the DEFL family.

It localises to the secreted. The polypeptide is Putative defensin-like protein 48 (Arabidopsis thaliana (Mouse-ear cress)).